Reading from the N-terminus, the 152-residue chain is Deoxyuridine 5'-triphosphate nucleotidohydrolase (152 aa).

Residues 71 to 73, N84, and 88 to 90 contribute to the substrate site; these read RSG and TVD.

Belongs to the dUTPase family. Mg(2+) serves as cofactor.

The catalysed reaction is dUTP + H2O = dUMP + diphosphate + H(+). It participates in pyrimidine metabolism; dUMP biosynthesis; dUMP from dCTP (dUTP route): step 2/2. Its function is as follows. This enzyme is involved in nucleotide metabolism: it produces dUMP, the immediate precursor of thymidine nucleotides and it decreases the intracellular concentration of dUTP so that uracil cannot be incorporated into DNA. The protein is Deoxyuridine 5'-triphosphate nucleotidohydrolase of Maricaulis maris (strain MCS10) (Caulobacter maris).